Consider the following 943-residue polypeptide: Nuclear factor of activated T-cells, cytoplasmic 1 (943 aa).

Positions Gly22 to Ala48 are disordered. The tract at residues Pro118 to Thr123 is calcineurin-binding. Residues Leu126–Glu218 form a transactivation domain A (TAD-A) region. Positions Pro200–Asp298 are disordered. Residues Gln201–Thr214 show a composition bias toward polar residues. Repeat copies occupy residues Ser203–Glu219 and Ser233–Glu249. Residues Ser203–Asp298 form a 3 X SP repeats region. A phosphoserine mark is found at Ser233 and Ser237. The span at His236–Glu248 shows a compositional bias: polar residues. Residue Ser245 is modified to Phosphoserine; by PKA. A Nuclear localization signal motif is present at residues Lys265 to Lys267. Phosphoserine; by PKA is present on Ser269. The segment covering Pro276–His288 has biased composition (pro residues). Repeat unit 3 spans residues Ser282–Asp298. Ser294 is subject to Phosphoserine; by PKA. The Nuclear export signal signature appears at Ser310 to Thr321. One can recognise an RHD domain in the interval Pro410–Ala592. A DNA-binding region spans residues Arg439–Gly446. The Nuclear localization signal motif lies at Lys682 to Lys684. The interval Thr703 to Ser943 is transactivation domain B (TAD-B). Residues His787–Thr912 form a disordered region. The span at Ser846 to Thr855 shows a compositional bias: pro residues. The Nuclear export signal signature appears at Tyr924–Arg933.

As to quaternary structure, member of the multicomponent NFATC transcription complex that consists of at least two components, a pre-existing cytoplasmic component NFATC2 and an inducible nuclear component NFATC1. Other members such as NFATC4, NFATC3 or members of the activating protein-1 family, MAF, GATA4 and Cbp/p300 can also bind the complex. NFATC proteins bind to DNA as monomers. Interacts with HOMER2 and HOMER3; this interaction may compete with calcineurin/PPP3CA-binding and hence prevent NFATC1 dephosphorylation and activation. Interacts with TLE6/GRG6. In terms of processing, phosphorylated by NFATC-kinase and GSK3B; phosphorylation induces NFATC1 nuclear exit and dephosphorylation by calcineurin promotes nuclear import. Phosphorylation by PKA and DYRK2 negatively modulates nuclear accumulation, and promotes subsequent phosphorylation by GSK3B or casein kinase 1. Expressed in thymus, peripheral leukocytes as T-cells and spleen. Isoforms A are preferentially expressed in effector T-cells (thymus and peripheral leukocytes) whereas isoforms B and isoforms C are preferentially expressed in naive T-cells (spleen). Isoforms B are expressed in naive T-cells after first antigen exposure and isoforms A are expressed in effector T-cells after second antigen exposure. Isoforms IA are widely expressed but not detected in liver nor pancreas, neural expression is strongest in corpus callosum. Isoforms IB are expressed mostly in muscle, cerebellum, placenta and thymus, neural expression in fetal and adult brain, strongest in corpus callosum.

Its subcellular location is the cytoplasm. The protein resides in the nucleus. Functionally, plays a role in the inducible expression of cytokine genes in T-cells, especially in the induction of the IL-2 or IL-4 gene transcription. Also controls gene expression in embryonic cardiac cells. Could regulate not only the activation and proliferation but also the differentiation and programmed death of T-lymphocytes as well as lymphoid and non-lymphoid cells. Required for osteoclastogenesis and regulates many genes important for osteoclast differentiation and function. The chain is Nuclear factor of activated T-cells, cytoplasmic 1 (NFATC1) from Homo sapiens (Human).